Here is a 100-residue protein sequence, read N- to C-terminus: Serine protease inhibitor 1 protein (100 aa).

Residues 1–20 form the signal peptide; it reads MKHLLIVSLVFVTIIWKIEC. Cystine bridges form between Cys42/Cys74, Cys51/Cys69, Cys54/Cys65, Cys58/Cys93, and Cys76/Cys90. The region spanning 42-93 is the TIL domain; it reads CGLNEVWMVCSSCEEECGKTPQPCPRICQPARCQCPAHKGYRRDGQGNCIFC.

The protein resides in the secreted. The protein is Serine protease inhibitor 1 protein of Caenorhabditis elegans.